The sequence spans 184 residues: Cytidylate kinase (184 aa).

Residue 8 to 16 (GQPGSGKTT) participates in ATP binding.

The protein belongs to the cytidylate kinase family. Type 2 subfamily.

The protein resides in the cytoplasm. It carries out the reaction CMP + ATP = CDP + ADP. The catalysed reaction is dCMP + ATP = dCDP + ADP. The sequence is that of Cytidylate kinase from Pyrobaculum aerophilum (strain ATCC 51768 / DSM 7523 / JCM 9630 / CIP 104966 / NBRC 100827 / IM2).